We begin with the raw amino-acid sequence, 384 residues long: N-acetylneuraminate epimerase (384 aa).

Residues 1–24 form the signal peptide; it reads MNMKTLLTYATLLSVTAFSHVVYA. Kelch repeat units lie at residues 46–90, 92–145, 147–184, 185–230, 233–281, 303–352, and 354–383; these read KVYV…SVIG, YIYL…YSPD, RQILFFGGYNKAYFDRYLRDISTTDKQVNPEVWQRIVD, DYMG…VIEG, VTLI…VAGA, QAFE…TTSE, and VLIVGGEKSGKEMSHKVYMLAWNGSTVEVI. The active-site Proton acceptor is Glu-239.

Belongs to the NanM family. Homodimer.

It localises to the periplasm. The catalysed reaction is N-acetyl-alpha-neuraminate = N-acetyl-beta-neuraminate. Its function is as follows. Converts alpha-N-acetylneuranimic acid (Neu5Ac) to the beta-anomer, accelerating the equilibrium between the alpha- and beta-anomers. Probably facilitates sialidase-negative bacteria to compete successfully for limited amounts of extracellular Neu5Ac, which is likely taken up in the beta-anomer. In addition, the rapid removal of sialic acid from solution might be advantageous to the bacterium to damp down host responses. The chain is N-acetylneuraminate epimerase from Vibrio cholerae serotype O1 (strain ATCC 39315 / El Tor Inaba N16961).